We begin with the raw amino-acid sequence, 147 residues long: Transthyretin (147 aa).

A signal peptide spans methionine 1 to alanine 20. At cysteine 30 the chain carries Sulfocysteine. Lysine 35 lines the L-thyroxine pocket. Residue glutamate 62 is modified to 4-carboxyglutamate. At serine 72 the chain carries Phosphoserine. Glutamate 74 serves as a coordination point for L-thyroxine. A glycan (N-linked (GlcNAc...) asparagine) is linked at asparagine 118. Position 137 (serine 137) interacts with L-thyroxine.

It belongs to the transthyretin family. Homotetramer. Dimer of dimers. In the homotetramer, subunits assemble around a central channel that can accommodate two ligand molecules. Interacts with RBP4. Post-translationally, sulfonation of the reactive cysteine Cys-30 enhances the stability of the native conformation of TTR, avoiding misassembly of the protein leading to amyloid formation. In terms of tissue distribution, detected in plasma (at protein level). Detected in liver.

The protein resides in the secreted. Its function is as follows. Thyroid hormone-binding protein. Probably transports thyroxine from the bloodstream to the brain. The chain is Transthyretin (Ttr) from Mus musculus (Mouse).